A 504-amino-acid chain; its full sequence is Putative BTB/POZ domain-containing protein R842 (504 aa).

The BTB domain occupies 21 to 91 (SDVKLILKDN…FYGFKSPSVT (71 aa)).

Belongs to the mimivirus BTB/WD family.

This is Putative BTB/POZ domain-containing protein R842 from Acanthamoeba polyphaga (Amoeba).